Here is a 454-residue protein sequence, read N- to C-terminus: V-type ATP synthase subunit I 2 (454 aa).

Residues 101–121 (EREGDAPSVPRGKSSVAHDSA) are disordered. 4 helical membrane-spanning segments follow: residues 254 to 274 (LLFG…VLGL), 293 to 313 (VFLS…EFFA), 351 to 371 (MAFF…GLII), and 424 to 444 (ACLS…SVCV).

This sequence belongs to the V-ATPase 116 kDa subunit family.

Its subcellular location is the cell membrane. Produces ATP from ADP in the presence of a proton gradient across the membrane. The sequence is that of V-type ATP synthase subunit I 2 (atpI2) from Treponema pallidum (strain Nichols).